Reading from the N-terminus, the 742-residue chain is Ferric enterobactin receptor PirA (742 aa).

An N-terminal signal peptide occupies residues 1 to 28 (MYPQFRRGHLAAAVLFASSSLLGGQALA). Residues 57-184 (QELKQAPGVS…AGGVVNIITK (128 aa)) enclose the TBDR plug domain. 2 disordered regions span residues 91–112 (GVNL…IDIR) and 409–435 (SSLK…PKSK). Positions 94-108 (LTGNSSSGQRGNNRQ) are enriched in polar residues. The 554-residue stretch at 189–742 (RLRGSMTVFT…AYYVSMTTSF (554 aa)) folds into the TBDR beta-barrel domain. Cys516 and Cys525 are joined by a disulfide. The TonB C-terminal box signature appears at 725-742 (ATYNEPGRAYYVSMTTSF).

The protein belongs to the TonB-dependent receptor family.

The protein localises to the cell outer membrane. Its function is as follows. Specific receptor for the siderophore ferric enterobactin. Probably involved in the transport of siderophores, including host catecholamines such as L-DOPA. This Pseudomonas aeruginosa (strain ATCC 15692 / DSM 22644 / CIP 104116 / JCM 14847 / LMG 12228 / 1C / PRS 101 / PAO1) protein is Ferric enterobactin receptor PirA.